The following is a 266-amino-acid chain: Putative carbamate hydrolase RutD (266 aa).

It belongs to the AB hydrolase superfamily. Hydrolase RutD family.

The catalysed reaction is carbamate + 2 H(+) = NH4(+) + CO2. In terms of biological role, involved in pyrimidine catabolism. May facilitate the hydrolysis of carbamate, a reaction that can also occur spontaneously. This is Putative carbamate hydrolase RutD from Escherichia coli O26:H11 (strain 11368 / EHEC).